Here is a 161-residue protein sequence, read N- to C-terminus: Anaerobic nitrite reductase GLB1 (161 aa).

Residues 9–157 (VFTEEQEALV…LVAAIKSEMK (149 aa)) enclose the Globin domain. The short motif at 42-46 (EIAPS) is the Homodimerization element. 5 residues coordinate heme b: Ser52, Lys66, His70, Arg100, and His105. Residues 112 to 123 (NEHFETRFALLE) carry the Homodimerization motif.

This sequence belongs to the plant globin family. As to quaternary structure, homodimer. It depends on heme b as a cofactor. Root specific.

It localises to the cytoplasm. It is found in the nucleus. It carries out the reaction Fe(III)-heme b-[protein] + nitric oxide + H2O = Fe(II)-heme b-[protein] + nitrite + 2 H(+). Phytoglobin that reduces nitrite to nitric oxide (NO) under anoxic conditions (e.g. during flooding or in waterlogged soil) and upon root nodulation. Required for general plant development and during nodulation, especially for the onset of symbiosis. Monitors nitric oxide (NO) levels during early phase of the nitrogen-fixing symbiosis and buffers oxygen in functioning nodules. May not function as an oxygen storage or transport protein. Has an unusually high affinity for O(2) through a hexacoordinate heme iron because of a very low dissociation constant. This Trema tomentosum (Peach-leaf poison-bush) protein is Anaerobic nitrite reductase GLB1 (GLB1).